The primary structure comprises 29 residues: Cytolysin Uc-1 (29 aa).

Residues 1-15 (DEQTGSKGPNENLPS) show a composition bias toward polar residues. The interval 1-29 (DEQTGSKGPNENLPSQKDLXAKASXLTEV) is disordered.

It localises to the secreted. It is found in the nematocyst. The protein resides in the target cell membrane. Functionally, pore-forming toxin that lyses bovine erythrocytes at nanomolar concentrations. Is devoid of enzymatic activity. Binds to monolayers and efficiently permeabilizes small lipid vesicles composed of sphingomyelin and cholesterol. The cytolytic activity is not prevented by cholesterol or sphingomyelin. This is Cytolysin Uc-1 from Urticina crassicornis (Mottled anemone).